The primary structure comprises 183 residues: Hypoxanthine-guanine-xanthine phosphoribosyltransferase (183 aa).

GMP-binding positions include 102 to 110, lysine 134, and aspartate 163; that span reads EDIIDTGLT. Residue aspartate 106 is the Proton acceptor of the active site. Aspartate 163 is a Mg(2+) binding site.

As to quaternary structure, homodimer. It depends on Mg(2+) as a cofactor.

It is found in the cytoplasm. It carries out the reaction IMP + diphosphate = hypoxanthine + 5-phospho-alpha-D-ribose 1-diphosphate. The enzyme catalyses GMP + diphosphate = guanine + 5-phospho-alpha-D-ribose 1-diphosphate. It catalyses the reaction XMP + diphosphate = xanthine + 5-phospho-alpha-D-ribose 1-diphosphate. Its pathway is purine metabolism; GMP biosynthesis via salvage pathway; GMP from guanine: step 1/1. The protein operates within purine metabolism; IMP biosynthesis via salvage pathway; IMP from hypoxanthine: step 1/1. It functions in the pathway purine metabolism; XMP biosynthesis via salvage pathway; XMP from xanthine: step 1/1. In terms of biological role, essential in nucleic acid metabolism of T.foetus because the parasite is unable to synthesize purine nucleotides de novo and relies on the HGXPRTase activities for its purine requirements by salvaging purine bases from the host. Works with guanine, hypoxanthine and xanthine. The protein is Hypoxanthine-guanine-xanthine phosphoribosyltransferase (HPT) of Tritrichomonas foetus (Trichomonas foetus).